The primary structure comprises 424 residues: UDP-N-acetylglucosamine 1-carboxyvinyltransferase (424 aa).

Residue 22–23 participates in phosphoenolpyruvate binding; it reads KN. Arg-93 lines the UDP-N-acetyl-alpha-D-glucosamine pocket. Cys-117 serves as the catalytic Proton donor. Cys-117 carries the post-translational modification 2-(S-cysteinyl)pyruvic acid O-phosphothioketal. UDP-N-acetyl-alpha-D-glucosamine-binding positions include 122–126, Asp-307, and Val-329; that span reads RPIDL.

The protein belongs to the EPSP synthase family. MurA subfamily.

Its subcellular location is the cytoplasm. The enzyme catalyses phosphoenolpyruvate + UDP-N-acetyl-alpha-D-glucosamine = UDP-N-acetyl-3-O-(1-carboxyvinyl)-alpha-D-glucosamine + phosphate. It participates in cell wall biogenesis; peptidoglycan biosynthesis. In terms of biological role, cell wall formation. Adds enolpyruvyl to UDP-N-acetylglucosamine. The protein is UDP-N-acetylglucosamine 1-carboxyvinyltransferase of Pelodictyon phaeoclathratiforme (strain DSM 5477 / BU-1).